A 301-amino-acid polypeptide reads, in one-letter code: Homoserine O-acetyltransferase (301 aa).

The Acyl-thioester intermediate role is filled by C142. Substrate contacts are provided by K163 and S192. Catalysis depends on H235, which acts as the Proton acceptor. E237 is an active-site residue. Substrate is bound at residue R249.

The protein belongs to the MetA family.

The protein resides in the cytoplasm. It catalyses the reaction L-homoserine + acetyl-CoA = O-acetyl-L-homoserine + CoA. It participates in amino-acid biosynthesis; L-methionine biosynthesis via de novo pathway; O-acetyl-L-homoserine from L-homoserine: step 1/1. Transfers an acetyl group from acetyl-CoA to L-homoserine, forming acetyl-L-homoserine. This is Homoserine O-acetyltransferase from Bacillus cereus (strain B4264).